A 311-amino-acid polypeptide reads, in one-letter code: tRNA-cytidine(32) 2-sulfurtransferase (311 aa).

Positions 47–52 match the PP-loop motif motif; that stretch reads SGGKDS. Positions 122, 125, and 213 each coordinate [4Fe-4S] cluster.

Belongs to the TtcA family. Homodimer. Requires Mg(2+) as cofactor. [4Fe-4S] cluster serves as cofactor.

The protein localises to the cytoplasm. The catalysed reaction is cytidine(32) in tRNA + S-sulfanyl-L-cysteinyl-[cysteine desulfurase] + AH2 + ATP = 2-thiocytidine(32) in tRNA + L-cysteinyl-[cysteine desulfurase] + A + AMP + diphosphate + H(+). Its pathway is tRNA modification. Its function is as follows. Catalyzes the ATP-dependent 2-thiolation of cytidine in position 32 of tRNA, to form 2-thiocytidine (s(2)C32). The sulfur atoms are provided by the cysteine/cysteine desulfurase (IscS) system. The chain is tRNA-cytidine(32) 2-sulfurtransferase from Escherichia coli (strain K12 / MC4100 / BW2952).